Here is a 236-residue protein sequence, read N- to C-terminus: Phosphoribosylaminoimidazole-succinocarboxamide synthase (236 aa).

The protein belongs to the SAICAR synthetase family.

The enzyme catalyses 5-amino-1-(5-phospho-D-ribosyl)imidazole-4-carboxylate + L-aspartate + ATP = (2S)-2-[5-amino-1-(5-phospho-beta-D-ribosyl)imidazole-4-carboxamido]succinate + ADP + phosphate + 2 H(+). Its pathway is purine metabolism; IMP biosynthesis via de novo pathway; 5-amino-1-(5-phospho-D-ribosyl)imidazole-4-carboxamide from 5-amino-1-(5-phospho-D-ribosyl)imidazole-4-carboxylate: step 1/2. The polypeptide is Phosphoribosylaminoimidazole-succinocarboxamide synthase (Rickettsia akari (strain Hartford)).